We begin with the raw amino-acid sequence, 91 residues long: Small ribosomal subunit protein bS20 (91 aa).

The tract at residues 1 to 25 (MANSPSAKKRAKQAEKRRSHNASLR) is disordered. Residues 7–20 (AKKRAKQAEKRRSH) are compositionally biased toward basic residues.

Belongs to the bacterial ribosomal protein bS20 family.

Its function is as follows. Binds directly to 16S ribosomal RNA. The sequence is that of Small ribosomal subunit protein bS20 from Azotobacter vinelandii (strain DJ / ATCC BAA-1303).